The sequence spans 409 residues: Transcription termination factor 3, mitochondrial (409 aa).

The transit peptide at 1 to 64 directs the protein to the mitochondrion; it reads MALLAQQLSR…KTDRALFSWS (64 aa). A disordered region spans residues 74 to 93; sequence RKSSTNSTLLPSVSEQPEKI.

It belongs to the mTERF family.

The protein localises to the mitochondrion. Its function is as follows. Binds promoter DNA and regulates initiation of transcription. Required for normal mitochondrial transcription and translation, and for normal assembly of mitochondrial respiratory complexes. Required for normal mitochondrial function. Maintains 16S rRNA levels and functions in mitochondrial ribosome assembly by regulating the biogenesis of the 39S ribosomal subunit. This Rattus norvegicus (Rat) protein is Transcription termination factor 3, mitochondrial (Mterf3).